The sequence spans 236 residues: Uridylate kinase (236 aa).

10–13 (KLSG) provides a ligand contact to ATP. A UMP-binding site is contributed by glycine 52. Residues glycine 53 and arginine 57 each contribute to the ATP site. Residues aspartate 72 and 133 to 140 (TGNPFFTT) contribute to the UMP site. ATP contacts are provided by threonine 160, tyrosine 166, and aspartate 169.

This sequence belongs to the UMP kinase family. Homohexamer.

The protein resides in the cytoplasm. The catalysed reaction is UMP + ATP = UDP + ADP. Its pathway is pyrimidine metabolism; CTP biosynthesis via de novo pathway; UDP from UMP (UMPK route): step 1/1. With respect to regulation, inhibited by UTP. Catalyzes the reversible phosphorylation of UMP to UDP. The protein is Uridylate kinase of Cupriavidus pinatubonensis (strain JMP 134 / LMG 1197) (Cupriavidus necator (strain JMP 134)).